The following is a 353-amino-acid chain: DNA-directed RNA polymerase subunit alpha (353 aa).

Residues 1 to 226 (MLISQRPTLT…ELFGLARELN (226 aa)) are alpha N-terminal domain (alpha-NTD). Residues 241–353 (ADHIASFGLP…TEDYAETEQL (113 aa)) are alpha C-terminal domain (alpha-CTD). Positions 326-353 (ATGTWSDTDAGSFGDAEGTEDYAETEQL) are disordered. Residues 342–353 (EGTEDYAETEQL) are compositionally biased toward acidic residues.

Belongs to the RNA polymerase alpha chain family. Homodimer. The RNAP catalytic core consists of 2 alpha, 1 beta, 1 beta' and 1 omega subunit. When a sigma factor is associated with the core the holoenzyme is formed, which can initiate transcription.

The enzyme catalyses RNA(n) + a ribonucleoside 5'-triphosphate = RNA(n+1) + diphosphate. In terms of biological role, DNA-dependent RNA polymerase catalyzes the transcription of DNA into RNA using the four ribonucleoside triphosphates as substrates. The sequence is that of DNA-directed RNA polymerase subunit alpha from Rhodococcus jostii (strain RHA1).